A 132-amino-acid polypeptide reads, in one-letter code: Small ribosomal subunit protein uS8 (132 aa).

Belongs to the universal ribosomal protein uS8 family. In terms of assembly, part of the 30S ribosomal subunit. Contacts proteins S5 and S12.

Functionally, one of the primary rRNA binding proteins, it binds directly to 16S rRNA central domain where it helps coordinate assembly of the platform of the 30S subunit. The chain is Small ribosomal subunit protein uS8 from Bifidobacterium animalis subsp. lactis (strain AD011).